The following is a 131-amino-acid chain: Small ribosomal subunit protein uS8c (131 aa).

The protein belongs to the universal ribosomal protein uS8 family. In terms of assembly, part of the 30S ribosomal subunit.

The protein localises to the plastid. The protein resides in the chloroplast. Its function is as follows. One of the primary rRNA binding proteins, it binds directly to 16S rRNA central domain where it helps coordinate assembly of the platform of the 30S subunit. This Tupiella akineta (Green alga) protein is Small ribosomal subunit protein uS8c (rps8).